The sequence spans 398 residues: Phosphoglycerate kinase (398 aa).

Substrate contacts are provided by residues 20-22 (DFN), Arg-35, 58-61 (HLGK), Arg-118, and Arg-155. ATP contacts are provided by residues Lys-208, Gly-296, Glu-327, and 354 to 357 (GGDS).

Belongs to the phosphoglycerate kinase family. Monomer.

It is found in the cytoplasm. The enzyme catalyses (2R)-3-phosphoglycerate + ATP = (2R)-3-phospho-glyceroyl phosphate + ADP. It functions in the pathway carbohydrate degradation; glycolysis; pyruvate from D-glyceraldehyde 3-phosphate: step 2/5. The chain is Phosphoglycerate kinase from Fusobacterium nucleatum subsp. nucleatum (strain ATCC 25586 / DSM 15643 / BCRC 10681 / CIP 101130 / JCM 8532 / KCTC 2640 / LMG 13131 / VPI 4355).